A 594-amino-acid polypeptide reads, in one-letter code: Solute carrier family 13 member 1 (594 aa).

5 consecutive transmembrane segments (helical) span residues 13 to 33, 40 to 60, 77 to 97, 113 to 133, and 134 to 154; these read FLLVVFTILVFLPLPLIIRTK, ILFVIAIFWITEALPLSITAL, VASAYFKDFHLLLIGVICLAT, VMMVGVNPAWLTLGFMSSTAF, and LSMWLSNTSTAAMVMPIVEAV. A glycan (N-linked (GlcNAc...) asparagine) is linked at asparagine 174. The span at 192–220 shows a compositional bias: basic and acidic residues; sequence TNEKKEKTKPAPGSSHDKGKVSRKMETEK. A disordered region spans residues 192–226; it reads TNEKKEKTKPAPGSSHDKGKVSRKMETEKNAVTGA. Transmembrane regions (helical) follow at residues 239–259, 283–303, 347–367, 380–400, 461–481, 487–507, 511–531, and 552–572; these read LMCLSVAYSSTIGGLTTITGT, SWFLFSFPVALILLLLSWIWL, IVTLVIFIVMALLWFSRDPGF, GYVTDSTVALVAGILFFLIPA, LSPLGSLPVWLIILISSLIVT, ASNPATITILFPILSPLAEAI, PLQILLPSTLCTSFAFLLPVA, and AGLGVNILGVAVVMLGMFTWI. N-linked (GlcNAc...) asparagine glycosylation occurs at asparagine 590.

This sequence belongs to the SLC13A/DASS transporter (TC 2.A.47) family. NADC subfamily. In terms of tissue distribution, highly expressed in kidney and ileum, detected at lower levels in duodenum/jejunum and colon, and at very low levels in cecum, testis, adrenal and adipose tissues. Expressed in the kidney.

It is found in the apical cell membrane. It carries out the reaction sulfate(out) + 3 Na(+)(out) = sulfate(in) + 3 Na(+)(in). It catalyses the reaction selenate(out) + 3 Na(+)(out) = selenate(in) + 3 Na(+)(in). The enzyme catalyses thiosulfate(out) + 3 Na(+)(out) = thiosulfate(in) + 3 Na(+)(in). Its function is as follows. Sodium:sulfate symporter that mediates sulfate reabsorption in the kidney and small intestine. Can also mediate the transport of selenate and thiosulfate. This Mus musculus (Mouse) protein is Solute carrier family 13 member 1 (Slc13a1).